The chain runs to 221 residues: Ribosomal RNA large subunit methyltransferase E (221 aa).

The S-adenosyl-L-methionine site is built by G72, W74, D91, D107, and D131. The Proton acceptor role is filled by K171.

This sequence belongs to the class I-like SAM-binding methyltransferase superfamily. RNA methyltransferase RlmE family.

It localises to the cytoplasm. The catalysed reaction is uridine(2552) in 23S rRNA + S-adenosyl-L-methionine = 2'-O-methyluridine(2552) in 23S rRNA + S-adenosyl-L-homocysteine + H(+). Its function is as follows. Specifically methylates the uridine in position 2552 of 23S rRNA at the 2'-O position of the ribose in the fully assembled 50S ribosomal subunit. In Zymomonas mobilis subsp. mobilis (strain ATCC 31821 / ZM4 / CP4), this protein is Ribosomal RNA large subunit methyltransferase E.